A 562-amino-acid polypeptide reads, in one-letter code: Septation ring formation regulator EzrA (562 aa).

Topologically, residues 1–2 are extracellular; sequence ME. The helical transmembrane segment at 3–21 threads the bilayer; sequence FVIGLLIVLLALFAAGYFF. Over 22 to 562 the chain is Cytoplasmic; the sequence is RKKIYAEIDR…VEKIKADISA (541 aa). Coiled-coil stretches lie at residues 377–425 and 470–497; these read YSLL…LKKT and MEEA…LVEQ.

The protein belongs to the EzrA family. Post-translationally, may be degraded by FtsH protease.

The protein localises to the cell membrane. Its subcellular location is the membrane raft. Functionally, negative regulator of FtsZ ring formation; modulates the frequency and position of FtsZ ring formation. Inhibits FtsZ ring formation at polar sites. Interacts either with FtsZ or with one of its binding partners to promote depolymerization. The polypeptide is Septation ring formation regulator EzrA (Bacillus subtilis (strain 168)).